The primary structure comprises 236 residues: OPEP-2 protein (236 aa).

This Orgyia pseudotsugata (Douglas-fir tussock moth) protein is OPEP-2 protein (OPEP-2).